Here is a 239-residue protein sequence, read N- to C-terminus: tRNA (guanine-N(1)-)-methyltransferase (239 aa).

S-adenosyl-L-methionine contacts are provided by residues glycine 110 and 129 to 134 (LGDFVL).

This sequence belongs to the RNA methyltransferase TrmD family. Homodimer.

Its subcellular location is the cytoplasm. The catalysed reaction is guanosine(37) in tRNA + S-adenosyl-L-methionine = N(1)-methylguanosine(37) in tRNA + S-adenosyl-L-homocysteine + H(+). Functionally, specifically methylates guanosine-37 in various tRNAs. The sequence is that of tRNA (guanine-N(1)-)-methyltransferase from Clostridium beijerinckii (strain ATCC 51743 / NCIMB 8052) (Clostridium acetobutylicum).